The chain runs to 337 residues: Biotin synthase (337 aa).

Positions 58 to 283 (PEVEVEGIIS…RTILRFAGGR (226 aa)) constitute a Radical SAM core domain. The [4Fe-4S] cluster site is built by C73, C77, and C80. [2Fe-2S] cluster-binding residues include C116, C149, C208, and R278.

It belongs to the radical SAM superfamily. Biotin synthase family. Homodimer. The cofactor is [4Fe-4S] cluster. It depends on [2Fe-2S] cluster as a cofactor.

It carries out the reaction (4R,5S)-dethiobiotin + (sulfur carrier)-SH + 2 reduced [2Fe-2S]-[ferredoxin] + 2 S-adenosyl-L-methionine = (sulfur carrier)-H + biotin + 2 5'-deoxyadenosine + 2 L-methionine + 2 oxidized [2Fe-2S]-[ferredoxin]. It functions in the pathway cofactor biosynthesis; biotin biosynthesis; biotin from 7,8-diaminononanoate: step 2/2. Catalyzes the conversion of dethiobiotin (DTB) to biotin by the insertion of a sulfur atom into dethiobiotin via a radical-based mechanism. This chain is Biotin synthase, found in Rhodococcus jostii (strain RHA1).